A 350-amino-acid polypeptide reads, in one-letter code: MSKNKLSKGQQRRVNANHQRRLKTSKEKPDYDDNLFGEPDEGIVISRFGMHADVESADGDVHRCNIRRTIRSLVTGDRVVWRPGKLAAEGVNVKGIVEAVHERTSVLTRPDFYDGVKPIAANIDQIVIVSAILPELSLNIIDRYLVACETLQIEPIIVLNKIDLLDDEGMAFVNEQMDIYRNIGYRVLMVSSHTQDGLKPLEEALTGRISIFAGQSGVGKSSLLNALLGLQKEILTNDVSDNSGLGQHTTTAARLYHFPHGGDVIDSPGVREFGLWHLEPEQITQGFVEFHDYLGLCKYRDCKHDTDPGCAIREAVDEGKIAETRFENYHRILESMAQVKTRKNFSDTDD.

The segment covering 1-17 (MSKNKLSKGQQRRVNAN) has biased composition (polar residues). Residues 1 to 33 (MSKNKLSKGQQRRVNANHQRRLKTSKEKPDYDD) are disordered. Residues 104–273 (TSVLTRPDFY…VIDSPGVREF (170 aa)) form the CP-type G domain. GTP is bound by residues 160 to 163 (NKID) and 214 to 222 (GQSGVGKSS). 4 residues coordinate Zn(2+): Cys-297, Cys-302, His-304, and Cys-310.

The protein belongs to the TRAFAC class YlqF/YawG GTPase family. RsgA subfamily. Monomer. Associates with 30S ribosomal subunit, binds 16S rRNA. Zn(2+) serves as cofactor.

The protein resides in the cytoplasm. In terms of biological role, one of several proteins that assist in the late maturation steps of the functional core of the 30S ribosomal subunit. Helps release RbfA from mature subunits. May play a role in the assembly of ribosomal proteins into the subunit. Circularly permuted GTPase that catalyzes slow GTP hydrolysis, GTPase activity is stimulated by the 30S ribosomal subunit. The chain is Small ribosomal subunit biogenesis GTPase RsgA from Escherichia fergusonii (strain ATCC 35469 / DSM 13698 / CCUG 18766 / IAM 14443 / JCM 21226 / LMG 7866 / NBRC 102419 / NCTC 12128 / CDC 0568-73).